The chain runs to 381 residues: Arrestin-C (381 aa).

Belongs to the arrestin family. Homodimer; disulfide-linked in response to retinal illumination. Interacts with CXCR4; the interaction is dependent on the C-terminal phosphorylation of CXCR4 and modulates the calcium ion mobilization activity of CXCR4. Interacts with GPR84. Inner and outer segments, and the inner plexiform regions of the retina.

It localises to the photoreceptor inner segment. The protein localises to the cell projection. It is found in the cilium. Its subcellular location is the photoreceptor outer segment. In terms of biological role, may play a role in an as yet undefined retina-specific signal transduction. Could bind to photoactivated-phosphorylated red/green opsins. The polypeptide is Arrestin-C (Arr3) (Mus musculus (Mouse)).